The chain runs to 312 residues: 4-hydroxyproline 2-epimerase (312 aa).

Cysteine 88 acts as the Proton acceptor in catalysis. Residues 89-90 (GH), histidine 208, and aspartate 234 contribute to the substrate site. Cysteine 238 serves as the catalytic Proton donor. 239–240 (GT) contributes to the substrate binding site.

This sequence belongs to the proline racemase family.

It carries out the reaction trans-4-hydroxy-L-proline = cis-4-hydroxy-D-proline. Functionally, catalyzes the epimerization of trans-4-hydroxy-L-proline (t4LHyp) to cis-4-hydroxy-D-proline (c4DHyp). Is likely involved in a degradation pathway that converts t4LHyp to alpha-ketoglutarate. Can also catalyze the epimerization of trans-3-hydroxy-L-proline (t3LHyp) to cis-3-hydroxy-D-proline (c3DHyp), albeit with 500-fold lower efficiency. Displays no proline racemase activity. In Xanthomonas campestris pv. campestris (strain ATCC 33913 / DSM 3586 / NCPPB 528 / LMG 568 / P 25), this protein is 4-hydroxyproline 2-epimerase.